The chain runs to 206 residues: Smr domain-containing protein C11H11.03c (206 aa).

The Smr domain maps to Ile75 to Pro150.

Its subcellular location is the cytoplasm. It is found in the nucleus. In Schizosaccharomyces pombe (strain 972 / ATCC 24843) (Fission yeast), this protein is Smr domain-containing protein C11H11.03c.